A 124-amino-acid polypeptide reads, in one-letter code: Holo-[acyl-carrier-protein] synthase (124 aa).

Residues D5 and E56 each coordinate Mg(2+).

The protein belongs to the P-Pant transferase superfamily. AcpS family. Requires Mg(2+) as cofactor.

The protein resides in the cytoplasm. It catalyses the reaction apo-[ACP] + CoA = holo-[ACP] + adenosine 3',5'-bisphosphate + H(+). In terms of biological role, transfers the 4'-phosphopantetheine moiety from coenzyme A to a Ser of acyl-carrier-protein. This Campylobacter hominis (strain ATCC BAA-381 / DSM 21671 / CCUG 45161 / LMG 19568 / NCTC 13146 / CH001A) protein is Holo-[acyl-carrier-protein] synthase.